The sequence spans 172 residues: uncharacterized protein (172 aa).

A PfpI endopeptidase domain is found at lysine 3–glutamine 171.

The protein belongs to the peptidase C56 family.

This is an uncharacterized protein from Staphylococcus haemolyticus (strain JCSC1435).